The following is a 130-amino-acid chain: Phosphoribosyl-AMP cyclohydrolase (130 aa).

Asp-77 is a Mg(2+) binding site. Cys-78 contacts Zn(2+). Mg(2+) is bound by residues Asp-79 and Asp-81. Zn(2+) is bound by residues Cys-95 and Cys-102.

Belongs to the PRA-CH family. Homodimer. It depends on Mg(2+) as a cofactor. Zn(2+) is required as a cofactor.

The protein resides in the cytoplasm. The catalysed reaction is 1-(5-phospho-beta-D-ribosyl)-5'-AMP + H2O = 1-(5-phospho-beta-D-ribosyl)-5-[(5-phospho-beta-D-ribosylamino)methylideneamino]imidazole-4-carboxamide. It functions in the pathway amino-acid biosynthesis; L-histidine biosynthesis; L-histidine from 5-phospho-alpha-D-ribose 1-diphosphate: step 3/9. Catalyzes the hydrolysis of the adenine ring of phosphoribosyl-AMP. In Pseudomonas putida (strain W619), this protein is Phosphoribosyl-AMP cyclohydrolase.